We begin with the raw amino-acid sequence, 117 residues long: MDKVYEAALLLDFYGQLLTKRQFEILDLYLNNDYSLGEIAEHLNISRQGVYDNIKRGRAMLDRMEEKLGLVHKFLQQKNRALEILKDIKSIDISSMSVEDAKILKRVEERIEEIVES.

The protein belongs to the UPF0122 family.

Its function is as follows. Might take part in the signal recognition particle (SRP) pathway. This is inferred from the conservation of its genetic proximity to ftsY/ffh. May be a regulatory protein. The chain is UPF0122 protein Cthe_0771 from Acetivibrio thermocellus (strain ATCC 27405 / DSM 1237 / JCM 9322 / NBRC 103400 / NCIMB 10682 / NRRL B-4536 / VPI 7372) (Clostridium thermocellum).